Reading from the N-terminus, the 194-residue chain is Imidazoleglycerol-phosphate dehydratase (194 aa).

The protein belongs to the imidazoleglycerol-phosphate dehydratase family.

It localises to the cytoplasm. It catalyses the reaction D-erythro-1-(imidazol-4-yl)glycerol 3-phosphate = 3-(imidazol-4-yl)-2-oxopropyl phosphate + H2O. It participates in amino-acid biosynthesis; L-histidine biosynthesis; L-histidine from 5-phospho-alpha-D-ribose 1-diphosphate: step 6/9. The chain is Imidazoleglycerol-phosphate dehydratase from Bacillus cereus (strain G9842).